The primary structure comprises 506 residues: Chromosomal replication initiator protein DnaA (506 aa).

Residues 1 to 77 (MECATTATTP…IWAEESGAKR (77 aa)) form a domain I, interacts with DnaA modulators region. The domain II stretch occupies residues 77–162 (RRVDLAVRNA…AVAGDVASGS (86 aa)). Composition is skewed to basic and acidic residues over residues 103–112 (TERTDMHSGD) and 121–142 (SDGRSTDARGADGRGSDARAVE). Residues 103–142 (TERTDMHSGDTRQQSARISDGRSTDARGADGRGSDARAVE) are disordered. The segment at 163–384 (PLDARLTFET…GALNKLLAFN (222 aa)) is domain III, AAA+ region. The ATP site is built by G210, G212, K213, and T214. The domain IV, binds dsDNA stretch occupies residues 385-506 (QLTGEPVTLE…EVLKRLALEA (122 aa)).

The protein belongs to the DnaA family. Oligomerizes as a right-handed, spiral filament on DNA at oriC.

Its subcellular location is the cytoplasm. Its function is as follows. Plays an essential role in the initiation and regulation of chromosomal replication. ATP-DnaA binds to the origin of replication (oriC) to initiate formation of the DNA replication initiation complex once per cell cycle. Binds the DnaA box (a 9 base pair repeat at the origin) and separates the double-stranded (ds)DNA. Forms a right-handed helical filament on oriC DNA; dsDNA binds to the exterior of the filament while single-stranded (ss)DNA is stabiized in the filament's interior. The ATP-DnaA-oriC complex binds and stabilizes one strand of the AT-rich DNA unwinding element (DUE), permitting loading of DNA polymerase. After initiation quickly degrades to an ADP-DnaA complex that is not apt for DNA replication. Binds acidic phospholipids. This Xanthobacter autotrophicus (strain ATCC BAA-1158 / Py2) protein is Chromosomal replication initiator protein DnaA.